The chain runs to 51 residues: Cytochrome b559 subunit beta (51 aa).

A helical membrane pass occupies residues 26-42 (WLAVHALTVPTIFFLGA). His30 is a heme binding site.

Belongs to the PsbE/PsbF family. In terms of assembly, heterodimer of an alpha subunit and a beta subunit. PSII is composed of 1 copy each of membrane proteins PsbA, PsbB, PsbC, PsbD, PsbE, PsbF, PsbH, PsbI, PsbJ, PsbK, PsbL, PsbM, PsbT, PsbX, Psb30/Ycf12, peripheral proteins PsbO, CyanoQ (PsbQ), PsbU, PsbV and a large number of cofactors. It forms dimeric complexes. Requires heme b as cofactor.

The protein resides in the cell inner membrane. In terms of biological role, this b-type cytochrome is tightly associated with the reaction center of photosystem II (PSII). PSII is a light-driven water:plastoquinone oxidoreductase that uses light energy to abstract electrons from H(2)O, generating O(2) and a proton gradient subsequently used for ATP formation. It consists of a core antenna complex that captures photons, and an electron transfer chain that converts photonic excitation into a charge separation. The sequence is that of Cytochrome b559 subunit beta from Gloeobacter violaceus (strain ATCC 29082 / PCC 7421).